The chain runs to 1637 residues: Endoribonuclease Dicer homolog 3b (1637 aa).

The interval 1 to 40 is disordered; that stretch reads MADDEAAVLPPPPPLPPPCRPHRQLRPRGSRPTADTTPRT. Pro residues predominate over residues 9–19; the sequence is LPPPPPLPPPC. Over residues 20-29 the composition is skewed to basic residues; that stretch reads RPHRQLRPRG. In terms of domain architecture, Helicase ATP-binding spans 46–222; the sequence is VFEAALRGNT…LHNCEAHISQ (177 aa). ATP is bound at residue 59–66; it reads LDTGSGKT. The DECH box signature appears at 169-172; that stretch reads DECH. In terms of domain architecture, Helicase C-terminal spans 404 to 556; that stretch reads SFGSSNEVLC…ALYRHPNALS (153 aa). The region spanning 581 to 671 is the Dicer dsRNA-binding fold domain; it reads CVNLIRKYCE…VPLTEEPMDT (91 aa). The PAZ domain maps to 882 to 1006; sequence EIIHLANKSL…VPPELLIHLD (125 aa). Positions 1031-1200 constitute an RNase III 1 domain; that stretch reads ASQLRREIGY…LVGAYYVGGG (170 aa). Mg(2+) contacts are provided by aspartate 1214, aspartate 1309, and serine 1312. An RNase III 2 domain is found at 1241–1389; the sequence is IEELEAKLKY…IAGAVFIDTD (149 aa). DRBM domains are found at residues 1412–1481 and 1545–1629; these read LALP…DLKQ and GPRS…KLQE.

The protein belongs to the helicase family. Dicer subfamily. May interact with ARGONAUTE1 or PINHEAD through their common PAZ domains. Mg(2+) is required as a cofactor. The cofactor is Mn(2+).

The protein localises to the nucleus. Probably involved in the RNA silencing pathway. May cleave double-stranded RNA to produce short 21-24 nucleotides (nt) RNAs which target the selective destruction of complementary RNAs. The chain is Endoribonuclease Dicer homolog 3b (DCL3B) from Oryza sativa subsp. japonica (Rice).